Here is a 157-residue protein sequence, read N- to C-terminus: Large ribosomal subunit protein uL22 (157 aa).

It belongs to the universal ribosomal protein uL22 family. As to quaternary structure, part of the 50S ribosomal subunit.

Functionally, this protein binds specifically to 23S rRNA. It makes multiple contacts with different domains of the 23S rRNA in the assembled 50S subunit and ribosome. The globular domain of the protein is located near the polypeptide exit tunnel on the outside of the subunit, while an extended beta-hairpin is found that lines the wall of the exit tunnel in the center of the 70S ribosome. The chain is Large ribosomal subunit protein uL22 from Methanocorpusculum labreanum (strain ATCC 43576 / DSM 4855 / Z).